The chain runs to 671 residues: DNA ligase (671 aa).

NAD(+) is bound by residues D32–D36, S81–L82, and E113. K115 (N6-AMP-lysine intermediate) is an active-site residue. Residues R136, E173, K290, and K314 each coordinate NAD(+). The Zn(2+) site is built by C408, C411, C426, and C432. The BRCT domain maps to E593–S671.

It belongs to the NAD-dependent DNA ligase family. LigA subfamily. Mg(2+) serves as cofactor. The cofactor is Mn(2+).

The catalysed reaction is NAD(+) + (deoxyribonucleotide)n-3'-hydroxyl + 5'-phospho-(deoxyribonucleotide)m = (deoxyribonucleotide)n+m + AMP + beta-nicotinamide D-nucleotide.. Its function is as follows. DNA ligase that catalyzes the formation of phosphodiester linkages between 5'-phosphoryl and 3'-hydroxyl groups in double-stranded DNA using NAD as a coenzyme and as the energy source for the reaction. It is essential for DNA replication and repair of damaged DNA. This Escherichia coli O6:H1 (strain CFT073 / ATCC 700928 / UPEC) protein is DNA ligase.